Consider the following 400-residue polypeptide: 3-phenylpropionate/cinnamic acid dioxygenase ferredoxin--NAD(+) reductase component (400 aa).

5 to 36 (TIIIVGGGQAAAMAAASLRQQGFTGELHLFSD) is an FAD binding site. 146 to 174 (SVVIVGAGTIGLELAASATQRGCKVTVIE) lines the NAD(+) pocket.

The protein belongs to the bacterial ring-hydroxylating dioxygenase ferredoxin reductase family. As to quaternary structure, this dioxygenase system consists of four proteins: the two subunits of the hydroxylase component (HcaE and HcaF), a ferredoxin (HcaC) and a ferredoxin reductase (HcaD). The cofactor is FAD.

The enzyme catalyses 2 reduced [2Fe-2S]-[ferredoxin] + NAD(+) + H(+) = 2 oxidized [2Fe-2S]-[ferredoxin] + NADH. Its pathway is aromatic compound metabolism; 3-phenylpropanoate degradation. In terms of biological role, part of the multicomponent 3-phenylpropionate dioxygenase, that converts 3-phenylpropionic acid (PP) and cinnamic acid (CI) into 3-phenylpropionate-dihydrodiol (PP-dihydrodiol) and cinnamic acid-dihydrodiol (CI-dihydrodiol), respectively. The chain is 3-phenylpropionate/cinnamic acid dioxygenase ferredoxin--NAD(+) reductase component from Escherichia coli O17:K52:H18 (strain UMN026 / ExPEC).